Here is a 107-residue protein sequence, read N- to C-terminus: Anti-adapter protein IraM (107 aa).

This sequence belongs to the IraM/RssC family.

It localises to the cytoplasm. Inhibits RpoS proteolysis by regulating RssB activity, thereby increasing the stability of the sigma stress factor RpoS during magnesium starvation. The chain is Anti-adapter protein IraM from Escherichia coli O7:K1 (strain IAI39 / ExPEC).